The following is a 770-amino-acid chain: Pyrophosphate-energized vacuolar membrane proton pump 1 (770 aa).

Over 1-9 (MVAPALLPE) the chain is Intravacuolar. The helical transmembrane segment at 10-36 (LWTEILVPICAVIGIAFSLFQWYVVSR) threads the bilayer. Residues 37 to 88 (VKLTSDLGASSSGGANNGKNGYGDYLIEEEEGVNDQSVVAKCAEIQTAISEG) are Cytoplasmic-facing. The helical transmembrane segment at 89–118 (ATSFLFTEYKYVGVFMIFFAAVIFVFLGSV) threads the bilayer. Topologically, residues 119 to 139 (EGFSTDNKPCTYDTTRTCKPA) are intravacuolar. The cysteines at positions 128 and 136 are disulfide-linked. A helical membrane pass occupies residues 140 to 167 (LATAAFSTIAFVLGAVTSVLSGFLGMKI). Over 168–190 (ATYANARTTLEARKGVGKAFIVA) the chain is Cytoplasmic. Residues 191–220 (FRSGAVMGFLLAASGLLVLYITINVFKIYY) traverse the membrane as a helical segment. Topologically, residues 221-223 (GDD) are intravacuolar. A helical transmembrane segment spans residues 224–252 (WEGLFEAITGYGLGGSSMALFGRVGGGIY). At 253–290 (TKAADVGADLVGKIERNIPEDDPRNPAVIADNVGDNVG) the chain is on the cytoplasmic side. Lys254 provides a ligand contact to substrate. Mg(2+) contacts are provided by Asp257, Asp261, and Asp287. A helical membrane pass occupies residues 291–316 (DIAGMGSDLFGSYAEASCAALVVASI). At 317 to 324 (SSFGINHD) the chain is on the intravacuolar side. The helical transmembrane segment at 325–350 (FTAMCYPLLISSMGILVCLITTLFAT) threads the bilayer. Over 351–358 (DFFEIKLV) the chain is Cytoplasmic. The helical transmembrane segment at 359 to 386 (KEIEPALKNQLIISTVIMTVGIAIVSWV) threads the bilayer. Topologically, residues 387-405 (GLPTSFTIFNFGTQKVVKN) are intravacuolar. Residues 406 to 429 (WQLFLCVCVGLWAGLIIGFVTEYY) form a helical membrane-spanning segment. At 430–451 (TSNAYSPVQDVADSCRTGAATN) the chain is on the cytoplasmic side. The chain crosses the membrane as a helical span at residues 452–476 (VIFGLALGYKSVIIPIFAIAISIFV). Residues 477–482 (SFSFAA) are Intravacuolar-facing. Residues 483-509 (MYGVAVAALGMLSTIATGLAIDAYGPI) form a helical membrane-spanning segment. At 510–538 (SDNAGGIAEMAGMSHRIRERTDALDAAGN) the chain is on the cytoplasmic side. 2 residues coordinate Mg(2+): Asp511 and Asn538. A helical membrane pass occupies residues 539–567 (TTAAIGKGFAIGSAALVSLALFGAFVSRA). At 568–577 (GIHTVDVLTP) the chain is on the intravacuolar side. Residues 578–606 (KVIIGLLVGAMLPYWFSAMTMKSVGSAAL) form a helical membrane-spanning segment. Topologically, residues 607–635 (KMVEEVRRQFNTIPGLMEGTAKPDYATCV) are cytoplasmic. A helical transmembrane segment spans residues 636–664 (KISTDASIKEMIPPGCLVMLTPLIVGFFF). A topological domain (intravacuolar) is located at residue Gly665. A helical transmembrane segment spans residues 666–693 (VETLSGVLAGSLVSGVQIAISASNTGGA). Topologically, residues 694–736 (WDNAKKYIEAGVSEHAKSLGPKGSEPHKAAVIGDTIGDPLKDT) are cytoplasmic. Residues Asp695 and Asp731 each contribute to the Mg(2+) site. Substrate is bound at residue Lys734. Residues 737-762 (SGPSLNILIKLMAVESLVFAPFFATH) form a helical membrane-spanning segment. At 763–770 (GGILFKYF) the chain is on the intravacuolar side.

This sequence belongs to the H(+)-translocating pyrophosphatase (TC 3.A.10) family. K(+)-stimulated subfamily. As to quaternary structure, monomer. As to expression, ubiquitous (at protein level). Mostly expressed in vascular tissues, meristems and root pericycle.

It localises to the vacuole membrane. Its subcellular location is the endosome membrane. The protein resides in the cell membrane. The enzyme catalyses diphosphate + H2O + H(+)(in) = 2 phosphate + 2 H(+)(out). Its activity is regulated as follows. Activated by K(+) and Mg(2+). Inhibited by Ca(2+), N,N'-dicyclohexylcarbodiimide (DCCD), N-ethylmaleimide (NEM) and aminomethylenediphosphonate (AMDP), and, to a lower extent, by fluoride (KF). Functionally, contributes to the transtonoplast (from cytosol to vacuole lumen) H(+)-electrochemical potential difference. It establishes a proton gradient of similar and often greater magnitude than the H(+)-ATPase on the same membrane. In addition, facilitates auxin transport by modulating apoplastic pH and regulates auxin-mediated developmental processes. Confers tolerance to NaCl and to drought by increasing ion retention. In Arabidopsis thaliana (Mouse-ear cress), this protein is Pyrophosphate-energized vacuolar membrane proton pump 1 (AVP1).